The primary structure comprises 1255 residues: Cilia- and flagella-associated protein 337 B (1255 aa).

The region spanning 87–122 (KLVRCLTNLFEEIDLNGNGILEWDEFTNYVIEKATV) is the EF-hand domain. Positions 100, 102, 104, and 111 each coordinate Ca(2+). 12 WD repeats span residues 228–269 (DLKT…WVLA), 282–322 (EFKN…KELE), 326–365 (AHTE…KKRV), 368–407 (EHTR…LIYK), 410–449 (GHSS…NVQC), 496–536 (VDDY…KIFS), 538–577 (VTQG…MIKA), 580–624 (KHSA…RTLE), 625–664 (LKDV…QNGS), 669–708 (TQYE…FKFQ), 769–808 (QQNL…TILE), and 844–883 (AHYE…LIDQ). Disordered stretches follow at residues 941-988 (IKSL…NFNP) and 1140-1160 (QQQV…QQPG). Low complexity predominate over residues 953 to 969 (TQESSTQEQEAAQQPQQ). Residues 1148–1160 (TEPSSNRSHQQPG) are compositionally biased toward polar residues.

It belongs to the CFAP337 family. Associates with components of the nexin-dynein regulatory complex (N-DRC) and the CFAP184:CFAP263 complex.

It is found in the cell projection. The protein resides in the cilium. Its function is as follows. Associates with components of the nexin-dynein regulatory complex (N-DRC), a key regulator of ciliary/flagellar motility, and might act as an inner dynein arm (IDA) hub or linkage. This is Cilia- and flagella-associated protein 337 B from Tetrahymena thermophila (strain SB210).